Reading from the N-terminus, the 277-residue chain is Thiamine thiazole synthase (277 aa).

Residues serine 36, glycine 63, valine 126, and 152 to 154 (HVD) contribute to the NAD(+) site. The Fe cation site is built by aspartate 154 and histidine 169. Methionine 230 is an NAD(+) binding site. Position 240 (arginine 240) interacts with glycine.

The protein belongs to the THI4 family. Homooctamer; tetramer of dimers. Requires Fe(2+) as cofactor.

It catalyses the reaction hydrogen sulfide + glycine + NAD(+) = ADP-5-ethyl-4-methylthiazole-2-carboxylate + nicotinamide + 3 H2O + H(+). The protein operates within cofactor biosynthesis; thiamine diphosphate biosynthesis. Functionally, involved in the biosynthesis of the thiazole moiety of thiamine. Catalyzes the conversion of NAD and glycine to adenosine diphosphate 5-(2-hydroxyethyl)-4-methylthiazole-2-carboxylate (ADT), an adenylated thiazole intermediate, using free sulfide as a source of sulfur. The chain is Thiamine thiazole synthase from Fervidobacterium nodosum (strain ATCC 35602 / DSM 5306 / Rt17-B1).